A 135-amino-acid polypeptide reads, in one-letter code: Ribosome-binding factor A (135 aa).

This sequence belongs to the RbfA family. Monomer. Binds 30S ribosomal subunits, but not 50S ribosomal subunits or 70S ribosomes.

Its subcellular location is the cytoplasm. Functionally, one of several proteins that assist in the late maturation steps of the functional core of the 30S ribosomal subunit. Associates with free 30S ribosomal subunits (but not with 30S subunits that are part of 70S ribosomes or polysomes). Required for efficient processing of 16S rRNA. May interact with the 5'-terminal helix region of 16S rRNA. In Caldicellulosiruptor saccharolyticus (strain ATCC 43494 / DSM 8903 / Tp8T 6331), this protein is Ribosome-binding factor A.